The primary structure comprises 345 residues: S-adenosylmethionine:tRNA ribosyltransferase-isomerase (345 aa).

This sequence belongs to the QueA family. In terms of assembly, monomer.

Its subcellular location is the cytoplasm. It catalyses the reaction 7-aminomethyl-7-carbaguanosine(34) in tRNA + S-adenosyl-L-methionine = epoxyqueuosine(34) in tRNA + adenine + L-methionine + 2 H(+). It participates in tRNA modification; tRNA-queuosine biosynthesis. In terms of biological role, transfers and isomerizes the ribose moiety from AdoMet to the 7-aminomethyl group of 7-deazaguanine (preQ1-tRNA) to give epoxyqueuosine (oQ-tRNA). The protein is S-adenosylmethionine:tRNA ribosyltransferase-isomerase of Shewanella woodyi (strain ATCC 51908 / MS32).